Reading from the N-terminus, the 392-residue chain is 1-deoxy-D-xylulose 5-phosphate reductoisomerase (392 aa).

NADPH is bound by residues Thr10, Gly11, Ser12, Ile13, Asn38, and Asn124. Position 125 (Lys125) interacts with 1-deoxy-D-xylulose 5-phosphate. Glu126 is a binding site for NADPH. Mn(2+) is bound at residue Asp150. 1-deoxy-D-xylulose 5-phosphate is bound by residues Ser151, Glu152, Ser176, and His199. A Mn(2+)-binding site is contributed by Glu152. Gly205 lines the NADPH pocket. Positions 212, 217, 218, and 221 each coordinate 1-deoxy-D-xylulose 5-phosphate. Mn(2+) is bound at residue Glu221.

The protein belongs to the DXR family. The cofactor is Mg(2+). It depends on Mn(2+) as a cofactor.

It carries out the reaction 2-C-methyl-D-erythritol 4-phosphate + NADP(+) = 1-deoxy-D-xylulose 5-phosphate + NADPH + H(+). The protein operates within isoprenoid biosynthesis; isopentenyl diphosphate biosynthesis via DXP pathway; isopentenyl diphosphate from 1-deoxy-D-xylulose 5-phosphate: step 1/6. Functionally, catalyzes the NADPH-dependent rearrangement and reduction of 1-deoxy-D-xylulose-5-phosphate (DXP) to 2-C-methyl-D-erythritol 4-phosphate (MEP). This chain is 1-deoxy-D-xylulose 5-phosphate reductoisomerase, found in Gloeobacter violaceus (strain ATCC 29082 / PCC 7421).